A 177-amino-acid chain; its full sequence is Coatomer subunit zeta-3 (177 aa).

The protein belongs to the adaptor complexes small subunit family. As to quaternary structure, oligomeric complex that consists of at least the alpha, beta, beta', gamma, delta, epsilon and zeta subunits.

The protein resides in the cytoplasm. Its subcellular location is the golgi apparatus membrane. It localises to the cytoplasmic vesicle. The protein localises to the COPI-coated vesicle membrane. Its function is as follows. The coatomer is a cytosolic protein complex that binds to dilysine motifs and reversibly associates with Golgi non-clathrin-coated vesicles, which further mediate biosynthetic protein transport from the ER, via the Golgi up to the trans Golgi network. Coatomer complex is required for budding from Golgi membranes, and is essential for the retrograde Golgi-to-ER transport of dilysine-tagged proteins. The zeta subunit may be involved in regulating the coat assembly and, hence, the rate of biosynthetic protein transport due to its association-dissociation properties with the coatomer complex. The protein is Coatomer subunit zeta-3 of Oryza sativa subsp. japonica (Rice).